Here is a 507-residue protein sequence, read N- to C-terminus: MGTLRADEISNIIRERIEQYNREVKIVNTGTVLQVGDGIARIHGLDEVMAGELIEFEEGTIGIALNLESNNVGVVLMGDGLMIKEGSSVKATGRIAQIPVSEAFLGRVINALAKPIDGRGEISSSESRLIESPAPGIISRRSVYEPLQTGLIAIDSMIPIGRGQRELIIGDRQTGKTAVATDTILNQKGQNVICVYVAIGQKASSVAQVVTTFQEGGAMEYTIVVAETADSPATLQYLAPYTGAALAEYFMYRERHTSIIYDDLSKQAQAYRQMSLLLRRPPGREAYPGDVFYLHSRLLERAAKLSSRLGEGSMTALPIVETQSGDVSAYIPTNVISITDGQIFLSADLFNAGIRPAINVGISVSRVGSAAQIKAMKQVAGKSKLELAQFAELEAFAQFASDLDKATQNQLARGQRLRELLKQSQSDPLAVEDQIATIYTGTNGYLDALEIGQVKKFLVGLRTYLTKKKPKFQEILSSTKIFTEEAETLLREAIQEQIELFLLQEQT.

Gly170 to Thr177 lines the ATP pocket.

The protein belongs to the ATPase alpha/beta chains family. In terms of assembly, F-type ATPases have 2 components, CF(1) - the catalytic core - and CF(0) - the membrane proton channel. CF(1) has five subunits: alpha(3), beta(3), gamma(1), delta(1), epsilon(1). CF(0) has four main subunits: a, b, b' and c.

The protein resides in the plastid. It localises to the chloroplast thylakoid membrane. It catalyses the reaction ATP + H2O + 4 H(+)(in) = ADP + phosphate + 5 H(+)(out). Functionally, produces ATP from ADP in the presence of a proton gradient across the membrane. The alpha chain is a regulatory subunit. This is ATP synthase subunit alpha, chloroplastic from Phalaenopsis aphrodite subsp. formosana (Moth orchid).